Consider the following 856-residue polypeptide: DNA mismatch repair protein MutS (856 aa).

618 to 625 (GPNMGGKS) is a binding site for ATP.

The protein belongs to the DNA mismatch repair MutS family.

In terms of biological role, this protein is involved in the repair of mismatches in DNA. It is possible that it carries out the mismatch recognition step. This protein has a weak ATPase activity. The protein is DNA mismatch repair protein MutS of Shewanella baltica (strain OS155 / ATCC BAA-1091).